Consider the following 1007-residue polypeptide: Bifunctional glutamine synthetase adenylyltransferase/adenylyl-removing enzyme (1007 aa).

Positions M1–L496 are adenylyl removase. The tract at residues N505–A1007 is adenylyl transferase.

It belongs to the GlnE family. Mg(2+) serves as cofactor.

It carries out the reaction [glutamine synthetase]-O(4)-(5'-adenylyl)-L-tyrosine + phosphate = [glutamine synthetase]-L-tyrosine + ADP. The catalysed reaction is [glutamine synthetase]-L-tyrosine + ATP = [glutamine synthetase]-O(4)-(5'-adenylyl)-L-tyrosine + diphosphate. Functionally, involved in the regulation of glutamine synthetase GlnA, a key enzyme in the process to assimilate ammonia. When cellular nitrogen levels are high, the C-terminal adenylyl transferase (AT) inactivates GlnA by covalent transfer of an adenylyl group from ATP to specific tyrosine residue of GlnA, thus reducing its activity. Conversely, when nitrogen levels are low, the N-terminal adenylyl removase (AR) activates GlnA by removing the adenylyl group by phosphorolysis, increasing its activity. The regulatory region of GlnE binds the signal transduction protein PII (GlnB) which indicates the nitrogen status of the cell. In Leifsonia xyli subsp. xyli (strain CTCB07), this protein is Bifunctional glutamine synthetase adenylyltransferase/adenylyl-removing enzyme.